Consider the following 318-residue polypeptide: Cytochrome c biogenesis protein CcsA (318 aa).

The next 8 membrane-spanning stretches (helical) occupy residues 17 to 37, 45 to 65, 75 to 95, 104 to 124, 149 to 169, 224 to 244, 258 to 275, and 287 to 307; these read VLALGLAAFALLLLAIPISFW, SAVVTLLVALANLVLTAQLVL, ISNLYESLCFLAWACTLAQLL, IVSAAATPMALLCVAFASFAL, VIMCSYAALLVGSFLSMAVLF, TITVGFLLLTLGLISGAVWAN, TWALICWMVYAAYLHTRF, and VAVAGIVVIVVCYIGVNLLGI.

The protein belongs to the CcmF/CycK/Ccl1/NrfE/CcsA family. As to quaternary structure, may interact with ccs1.

Its subcellular location is the cellular thylakoid membrane. Functionally, required during biogenesis of c-type cytochromes (cytochrome c6 and cytochrome f) at the step of heme attachment. The chain is Cytochrome c biogenesis protein CcsA from Prochlorococcus marinus (strain MIT 9313).